The chain runs to 561 residues: uncharacterized protein (561 aa).

Disordered stretches follow at residues 369 to 390 and 429 to 515; these read SVPE…LSKG and EGLG…GESE. A Phosphoserine modification is found at serine 383. Residues 465-503 show a composition bias toward polar residues; it reads NISPESSRFGTPSDPNSSSQSLGNEVLSRPNSNSNSAES.

This is an uncharacterized protein from Schizosaccharomyces pombe (strain 972 / ATCC 24843) (Fission yeast).